A 102-amino-acid polypeptide reads, in one-letter code: MQKARIRLTGTDFNKVETVCDRIREIAERTGVNLAGPIPLPTKRLVVPIRKSPDGEGTATFDRWQMRVHKRLIDIDADERALRQLMRIQVPKDIGIEIVLES.

It belongs to the universal ribosomal protein uS10 family. As to quaternary structure, part of the 30S ribosomal subunit.

In terms of biological role, involved in the binding of tRNA to the ribosomes. The polypeptide is Small ribosomal subunit protein uS10 (Methanoregula boonei (strain DSM 21154 / JCM 14090 / 6A8)).